A 173-amino-acid chain; its full sequence is Endoribonuclease YbeY (173 aa).

Zn(2+)-binding residues include H120, H124, and H130.

The protein belongs to the endoribonuclease YbeY family. The cofactor is Zn(2+).

The protein localises to the cytoplasm. Its function is as follows. Single strand-specific metallo-endoribonuclease involved in late-stage 70S ribosome quality control and in maturation of the 3' terminus of the 16S rRNA. This chain is Endoribonuclease YbeY, found in Kineococcus radiotolerans (strain ATCC BAA-149 / DSM 14245 / SRS30216).